We begin with the raw amino-acid sequence, 165 residues long: MSLPDKAFPVSWDQFHRDARALAWRIAGLDREWRAIVAITRGGLVPAAIICRELGIRLIEIVCIASYHDYTSQGEMQVLKGIGASLLENQGEGVIVVDDLTDTGKTAAIVREMMPRAHFATVYAKPKGRPLIDTFVTEVSQDTWIYFPWDMGFTYQEPIAGGKRG.

5-phospho-alpha-D-ribose 1-diphosphate-binding positions include 41 to 42 (RG) and 98 to 106 (DDLTDTGKT). Aspartate 99 is a binding site for Mg(2+). Residues aspartate 102 and isoleucine 145 each coordinate guanine. The xanthine site is built by aspartate 102 and isoleucine 145. Residues 102–106 (DTGKT) and 144–145 (WI) each bind GMP.

The protein belongs to the purine/pyrimidine phosphoribosyltransferase family. XGPT subfamily. Homotetramer. The cofactor is Mg(2+).

It is found in the cell inner membrane. The enzyme catalyses GMP + diphosphate = guanine + 5-phospho-alpha-D-ribose 1-diphosphate. It carries out the reaction XMP + diphosphate = xanthine + 5-phospho-alpha-D-ribose 1-diphosphate. It catalyses the reaction IMP + diphosphate = hypoxanthine + 5-phospho-alpha-D-ribose 1-diphosphate. The protein operates within purine metabolism; GMP biosynthesis via salvage pathway; GMP from guanine: step 1/1. Its pathway is purine metabolism; XMP biosynthesis via salvage pathway; XMP from xanthine: step 1/1. Functionally, purine salvage pathway enzyme that catalyzes the transfer of the ribosyl-5-phosphate group from 5-phospho-alpha-D-ribose 1-diphosphate (PRPP) to the N9 position of the 6-oxopurines guanine and xanthine to form the corresponding ribonucleotides GMP (guanosine 5'-monophosphate) and XMP (xanthosine 5'-monophosphate), with the release of PPi. To a lesser extent, also acts on hypoxanthine. This chain is Xanthine-guanine phosphoribosyltransferase, found in Brucella suis (strain ATCC 23445 / NCTC 10510).